The following is a 490-amino-acid chain: Glutamate--tRNA ligase (490 aa).

Residues 15–25 carry the 'HIGH' region motif; it reads PSPTGYLHVGG. The 'KMSKS' region signature appears at 259 to 263; it reads KLSKR. Lysine 262 is an ATP binding site.

Belongs to the class-I aminoacyl-tRNA synthetase family. Glutamate--tRNA ligase type 1 subfamily. Monomer.

The protein localises to the cytoplasm. The catalysed reaction is tRNA(Glu) + L-glutamate + ATP = L-glutamyl-tRNA(Glu) + AMP + diphosphate. Its function is as follows. Catalyzes the attachment of glutamate to tRNA(Glu) in a two-step reaction: glutamate is first activated by ATP to form Glu-AMP and then transferred to the acceptor end of tRNA(Glu). The chain is Glutamate--tRNA ligase from Bdellovibrio bacteriovorus (strain ATCC 15356 / DSM 50701 / NCIMB 9529 / HD100).